We begin with the raw amino-acid sequence, 176 residues long: Dual-action ribosomal maturation protein DarP (176 aa).

Residues 1-10 show a composition bias toward polar residues; sequence MTVPNHQQDI. The interval 1–22 is disordered; the sequence is MTVPNHQQDISDSDLESRPSKT.

The protein belongs to the DarP family.

It localises to the cytoplasm. In terms of biological role, member of a network of 50S ribosomal subunit biogenesis factors which assembles along the 30S-50S interface, preventing incorrect 23S rRNA structures from forming. Promotes peptidyl transferase center (PTC) maturation. This is Dual-action ribosomal maturation protein DarP from Nitrosomonas eutropha (strain DSM 101675 / C91 / Nm57).